Here is a 226-residue protein sequence, read N- to C-terminus: Ribonuclease 3 (226 aa).

One can recognise an RNase III domain in the interval 6-128 (INRLQRKLGY…LIGGVFLDSD (123 aa)). Glutamate 41 provides a ligand contact to Mg(2+). Aspartate 45 is an active-site residue. Mg(2+) contacts are provided by aspartate 114 and glutamate 117. Residue glutamate 117 is part of the active site. Positions 155–225 (DPKTRLQEYL…AEQALKKLEL (71 aa)) constitute a DRBM domain.

It belongs to the ribonuclease III family. In terms of assembly, homodimer. The cofactor is Mg(2+).

It is found in the cytoplasm. It carries out the reaction Endonucleolytic cleavage to 5'-phosphomonoester.. In terms of biological role, digests double-stranded RNA. Involved in the processing of primary rRNA transcript to yield the immediate precursors to the large and small rRNAs (23S and 16S). Processes some mRNAs, and tRNAs when they are encoded in the rRNA operon. Processes pre-crRNA and tracrRNA of type II CRISPR loci if present in the organism. The polypeptide is Ribonuclease 3 (Escherichia coli O139:H28 (strain E24377A / ETEC)).